A 137-amino-acid polypeptide reads, in one-letter code: Mandibular organ-inhibiting hormone (137 aa).

A signal peptide spans 1 to 26 (MTTKCTVMAVVLAACICLQVLPQAYG). A Pyrrolidone carboxylic acid modification is found at Q63. Disulfide bonds link C69/C105, C85/C101, and C88/C114. A Valine amide modification is found at V134.

The protein belongs to the arthropod CHH/MIH/GIH/VIH hormone family. Produced by the medulla terminalis X-organ in the eyestalks and transported to the sinus gland where it is stored and released.

Its subcellular location is the secreted. Its function is as follows. Represses the synthesis of methyl farnesoate, the precursor of insect juvenile hormone III in the mandibular organ. Also has hyperglycemic activity. The sequence is that of Mandibular organ-inhibiting hormone from Libinia emarginata (Portly spider crab).